The primary structure comprises 309 residues: NADH-cytochrome b5 reductase 1 (309 aa).

Residues 29–49 (EFVPYAVALTAVLAGFKLFTG) form a helical membrane-spanning segment. Residues 60 to 165 (TEFQEFVLKE…RGPKGAMVYT (106 aa)) enclose the FAD-binding FR-type domain. Residues 145–160 (TTLKVGDVMKVRGPKG) and 171–208 (HIGMIAGGTGITPMLQVIKAIIRNRPRNGGTDITKVDL) each bind FAD.

The protein belongs to the flavoprotein pyridine nucleotide cytochrome reductase family. In terms of assembly, monomer. Component of the 2-(3-amino-3-carboxypropyl)histidine synthase complex composed of dph1, dph2, dph3 and a NADH-dependent reductase, predominantly cbr1. The cofactor is FAD.

It localises to the mitochondrion outer membrane. It catalyses the reaction 2 Fe(III)-[cytochrome b5] + NADH = 2 Fe(II)-[cytochrome b5] + NAD(+) + H(+). The enzyme catalyses 2 Fe(3+)-[Dph3] + NADH = 2 Fe(2+)-[Dph3] + NAD(+) + H(+). It participates in protein modification; peptidyl-diphthamide biosynthesis. NADH-dependent reductase for dph3 and cytochrome b5. Required for the first step of diphthamide biosynthesis, a post-translational modification of histidine which occurs in elongation factor 2. Dph1 and dph2 transfer a 3-amino-3-carboxypropyl (ACP) group from S-adenosyl-L-methionine (SAM) to a histidine residue, the reaction is assisted by a reduction system comprising dph3 and a NADH-dependent reductase, predominantly cbr1. By reducing dph3, also involved in the formation of the tRNA wobble base modification mcm5s 2U (5-methoxycarbonylmethyl-2-thiouridine), mediated by the elongator complex. The cytochrome b5/NADH cytochrome b5 reductase electron transfer system supports the catalytic activity of several sterol biosynthetic enzymes. The polypeptide is NADH-cytochrome b5 reductase 1 (cbr1) (Aspergillus clavatus (strain ATCC 1007 / CBS 513.65 / DSM 816 / NCTC 3887 / NRRL 1 / QM 1276 / 107)).